The following is a 250-amino-acid chain: 1-(5-phosphoribosyl)-5-[(5-phosphoribosylamino)methylideneamino] imidazole-4-carboxamide isomerase (250 aa).

Asp-8 serves as the catalytic Proton acceptor. Asp-131 functions as the Proton donor in the catalytic mechanism.

It belongs to the HisA/HisF family.

It localises to the cytoplasm. The enzyme catalyses 1-(5-phospho-beta-D-ribosyl)-5-[(5-phospho-beta-D-ribosylamino)methylideneamino]imidazole-4-carboxamide = 5-[(5-phospho-1-deoxy-D-ribulos-1-ylimino)methylamino]-1-(5-phospho-beta-D-ribosyl)imidazole-4-carboxamide. It participates in amino-acid biosynthesis; L-histidine biosynthesis; L-histidine from 5-phospho-alpha-D-ribose 1-diphosphate: step 4/9. The sequence is that of 1-(5-phosphoribosyl)-5-[(5-phosphoribosylamino)methylideneamino] imidazole-4-carboxamide isomerase from Paraburkholderia xenovorans (strain LB400).